The following is a 212-amino-acid chain: Thymidylate kinase (212 aa).

Residue 10 to 17 (GPDGAGKT) participates in ATP binding.

It belongs to the thymidylate kinase family.

It catalyses the reaction dTMP + ATP = dTDP + ADP. In terms of biological role, phosphorylation of dTMP to form dTDP in both de novo and salvage pathways of dTTP synthesis. This chain is Thymidylate kinase, found in Enterococcus faecalis (strain ATCC 700802 / V583).